Consider the following 397-residue polypeptide: 8-amino-7-oxononanoate synthase (397 aa).

Arg21 contributes to the substrate binding site. 110–111 contributes to the pyridoxal 5'-phosphate binding site; that stretch reads GY. Residue His135 coordinates substrate. Residues Ser181, His209, and Thr238 each coordinate pyridoxal 5'-phosphate. Lys241 bears the N6-(pyridoxal phosphate)lysine mark. Residue Thr355 participates in substrate binding.

Belongs to the class-II pyridoxal-phosphate-dependent aminotransferase family. BioF subfamily. In terms of assembly, homodimer. It depends on pyridoxal 5'-phosphate as a cofactor.

The catalysed reaction is 6-carboxyhexanoyl-[ACP] + L-alanine + H(+) = (8S)-8-amino-7-oxononanoate + holo-[ACP] + CO2. Its pathway is cofactor biosynthesis; biotin biosynthesis. In terms of biological role, catalyzes the decarboxylative condensation of pimeloyl-[acyl-carrier protein] and L-alanine to produce 8-amino-7-oxononanoate (AON), [acyl-carrier protein], and carbon dioxide. The chain is 8-amino-7-oxononanoate synthase from Saccharophagus degradans (strain 2-40 / ATCC 43961 / DSM 17024).